A 160-amino-acid chain; its full sequence is 6,7-dimethyl-8-ribityllumazine synthase (160 aa).

5-amino-6-(D-ribitylamino)uracil-binding positions include Trp-27, 59–61 (AIE), and 81–83 (VVI). Residue 86–87 (QT) participates in (2S)-2-hydroxy-3-oxobutyl phosphate binding. His-89 serves as the catalytic Proton donor. A 5-amino-6-(D-ribitylamino)uracil-binding site is contributed by Asn-114. Residue Arg-128 participates in (2S)-2-hydroxy-3-oxobutyl phosphate binding.

Belongs to the DMRL synthase family. As to quaternary structure, homopentamer.

It catalyses the reaction (2S)-2-hydroxy-3-oxobutyl phosphate + 5-amino-6-(D-ribitylamino)uracil = 6,7-dimethyl-8-(1-D-ribityl)lumazine + phosphate + 2 H2O + H(+). It functions in the pathway cofactor biosynthesis; riboflavin biosynthesis; riboflavin from 2-hydroxy-3-oxobutyl phosphate and 5-amino-6-(D-ribitylamino)uracil: step 1/2. Catalyzes the formation of 6,7-dimethyl-8-ribityllumazine by condensation of 5-amino-6-(D-ribitylamino)uracil with 3,4-dihydroxy-2-butanone 4-phosphate. This is the penultimate step in the biosynthesis of riboflavin. This chain is 6,7-dimethyl-8-ribityllumazine synthase, found in Mycolicibacterium paratuberculosis (strain ATCC BAA-968 / K-10) (Mycobacterium paratuberculosis).